The primary structure comprises 210 residues: Large ribosomal subunit protein bL25 (210 aa).

Residues 185-210 (APEPAGQPEVPPEPAEEAKAKTIEKE) are disordered. Residues 200-210 (EEAKAKTIEKE) show a composition bias toward basic and acidic residues.

The protein belongs to the bacterial ribosomal protein bL25 family. CTC subfamily. Part of the 50S ribosomal subunit; part of the 5S rRNA/L5/L18/L25 subcomplex. Contacts the 5S rRNA. Binds to the 5S rRNA independently of L5 and L18.

Functionally, this is one of the proteins that binds to the 5S RNA in the ribosome where it forms part of the central protuberance. This chain is Large ribosomal subunit protein bL25, found in Desulforamulus reducens (strain ATCC BAA-1160 / DSM 100696 / MI-1) (Desulfotomaculum reducens).